We begin with the raw amino-acid sequence, 527 residues long: Type 2 DNA topoisomerase 6 subunit B (527 aa).

Residues asparagine 39, aspartate 73, 94–95 (SK), 103–110 (GVFGLGLK), and lysine 421 contribute to the ATP site.

This sequence belongs to the TOP6B family. Homodimer. Heterotetramer of two Top6A and two Top6B chains.

It catalyses the reaction ATP-dependent breakage, passage and rejoining of double-stranded DNA.. Relaxes both positive and negative superturns and exhibits a strong decatenase activity. In Pyrobaculum aerophilum (strain ATCC 51768 / DSM 7523 / JCM 9630 / CIP 104966 / NBRC 100827 / IM2), this protein is Type 2 DNA topoisomerase 6 subunit B.